A 158-amino-acid polypeptide reads, in one-letter code: 6,7-dimethyl-8-ribityllumazine synthase (158 aa).

5-amino-6-(D-ribitylamino)uracil contacts are provided by residues phenylalanine 23, 61-63 (SFE), and 85-87 (AVI). (2S)-2-hydroxy-3-oxobutyl phosphate is bound at residue 90-91 (DT). The Proton donor role is filled by histidine 93. Residue phenylalanine 118 participates in 5-amino-6-(D-ribitylamino)uracil binding. Arginine 132 contacts (2S)-2-hydroxy-3-oxobutyl phosphate.

Belongs to the DMRL synthase family.

It carries out the reaction (2S)-2-hydroxy-3-oxobutyl phosphate + 5-amino-6-(D-ribitylamino)uracil = 6,7-dimethyl-8-(1-D-ribityl)lumazine + phosphate + 2 H2O + H(+). The protein operates within cofactor biosynthesis; riboflavin biosynthesis; riboflavin from 2-hydroxy-3-oxobutyl phosphate and 5-amino-6-(D-ribitylamino)uracil: step 1/2. Catalyzes the formation of 6,7-dimethyl-8-ribityllumazine by condensation of 5-amino-6-(D-ribitylamino)uracil with 3,4-dihydroxy-2-butanone 4-phosphate. This is the penultimate step in the biosynthesis of riboflavin. This chain is 6,7-dimethyl-8-ribityllumazine synthase, found in Prochlorococcus marinus (strain NATL2A).